The sequence spans 295 residues: Ribosomal RNA small subunit methyltransferase A (295 aa).

S-adenosyl-L-methionine is bound by residues N31, L33, G58, E79, D104, and N129.

It belongs to the class I-like SAM-binding methyltransferase superfamily. rRNA adenine N(6)-methyltransferase family. RsmA subfamily.

It localises to the cytoplasm. It carries out the reaction adenosine(1518)/adenosine(1519) in 16S rRNA + 4 S-adenosyl-L-methionine = N(6)-dimethyladenosine(1518)/N(6)-dimethyladenosine(1519) in 16S rRNA + 4 S-adenosyl-L-homocysteine + 4 H(+). In terms of biological role, specifically dimethylates two adjacent adenosines (A1518 and A1519) in the loop of a conserved hairpin near the 3'-end of 16S rRNA in the 30S particle. May play a critical role in biogenesis of 30S subunits. The chain is Ribosomal RNA small subunit methyltransferase A from Enterococcus faecalis (strain ATCC 700802 / V583).